We begin with the raw amino-acid sequence, 282 residues long: E3 ubiquitin-protein ligase SIAH1B (282 aa).

Residues 1-17 (MSRQAATALSTGTSKCP) show a composition bias toward polar residues. Residues 1-23 (MSRQAATALSTGTSKCPPSQRVP) form a disordered region. At Ser-19 the chain carries Phosphoserine; by ATM and ATR. The RING-type zinc finger occupies 41 to 76 (CPVCFDYVLPPILQCQSGHLVCSNCRPKLTCCPTCR). The SBD stretch occupies residues 90–282 (VANSVLFPCK…LGINVTISMC (193 aa)). An SIAH-type zinc finger spans residues 93–153 (SVLFPCKYSA…VMPHLMHQHK (61 aa)). Residues Cys-98, Cys-105, His-117, Cys-121, Cys-128, Cys-135, His-147, and His-152 each contribute to the Zn(2+) site.

This sequence belongs to the SINA (Seven in absentia) family. As to quaternary structure, homodimer. Phosphorylated on Ser-19 by ATM and ATR. As to expression, widely expressed at low level in embryos and adults. Due to the high similarity between SIAH1A and SIAH1B, it is difficult to distinguish its own tissue specificity. Overexpressed in endothelial cells of adult lung.

It localises to the cytoplasm. The protein resides in the nucleus. The catalysed reaction is S-ubiquitinyl-[E2 ubiquitin-conjugating enzyme]-L-cysteine + [acceptor protein]-L-lysine = [E2 ubiquitin-conjugating enzyme]-L-cysteine + N(6)-ubiquitinyl-[acceptor protein]-L-lysine.. The protein operates within protein modification; protein ubiquitination. Functionally, E3 ubiquitin-protein ligase that mediates ubiquitination and subsequent proteasomal degradation of target proteins. E3 ubiquitin ligases accept ubiquitin from an E2 ubiquitin-conjugating enzyme in the form of a thioester and then directly transfers the ubiquitin to targeted substrates. Mediates E3 ubiquitin ligase activity either through direct binding to substrates or by functioning as the essential RING domain subunit of larger E3 complexes. The sequence is that of E3 ubiquitin-protein ligase SIAH1B (Siah1b) from Mus musculus (Mouse).